Reading from the N-terminus, the 376-residue chain is Fibromodulin (376 aa).

The signal sequence occupies residues 1-18 (MQWASILLLAGLCSLSWA). Glutamine 19 carries the pyrrolidone carboxylic acid modification. Sulfotyrosine occurs at positions 20, 38, 45, 47, 50, 53, 55, 63, and 65. The region spanning 67 to 105 (SPPQPEPRDCPQECDCPPNFPTAMYCDNRNLKYLPFVPS) is the LRRNT domain. LRR repeat units follow at residues 106–127 (RMKYVYFQNNQISSIQEGVFDN), 130–151 (GLLWIALHGNQITSDKVGKKVF), 156–176 (HLERLYLDHNNLTRIPSPLPR), 177–198 (SLRELHLDHNQISRVPNNALEG), 201–222 (NLTALYLHHNEIQEVGSSMKGL), 224–245 (SLILLDLSYNHLRKVPDGLPSA), 246–266 (LEQLYLEHNNVFSVPDSYFRG), and 269–289 (KLLYVRLSHNSLTNNGLASNT). N-linked (GlcNAc...) (keratan sulfate) asparagine glycosylation is present at asparagine 127. Asparagine 166 carries an N-linked (GlcNAc...) (keratan sulfate) asparagine glycan. N-linked (GlcNAc...) (keratan sulfate) asparagine glycosylation occurs at asparagine 201. N-linked (GlcNAc...) (keratan sulfate) asparagine glycosylation occurs at asparagine 291. 2 LRR repeats span residues 294 to 315 (SLLELDLSYNQLQKIPPVSTNL) and 316 to 335 (ENLYLQGNRINEFSISSFCT). A disulfide bond links cysteine 334 and cysteine 367. N-linked (GlcNAc...) asparagine glycosylation occurs at asparagine 341. The LRR 11 repeat unit spans residues 344-365 (KLQVLRLDGNEIKRSAMPADAP).

This sequence belongs to the small leucine-rich proteoglycan (SLRP) family. SLRP class II subfamily. Binds to type I and type II collagen. Binds keratan sulfate chains.

It localises to the secreted. The protein localises to the extracellular space. Its subcellular location is the extracellular matrix. Affects the rate of fibrils formation. May have a primary role in collagen fibrillogenesis. This Bos taurus (Bovine) protein is Fibromodulin (FMOD).